We begin with the raw amino-acid sequence, 262 residues long: Putative phosphatase HI_0003 (262 aa).

The active-site Nucleophile is the Asp9. The Mg(2+) site is built by Asp9 and Asn11. Phosphate contacts are provided by residues 43 to 44 (SA) and Lys189. Asp212 is a Mg(2+) binding site. Residue Asn215 participates in phosphate binding.

This sequence belongs to the HAD-like hydrolase superfamily. Cof family. Requires Mg(2+) as cofactor.

This chain is Putative phosphatase HI_0003, found in Haemophilus influenzae (strain ATCC 51907 / DSM 11121 / KW20 / Rd).